A 271-amino-acid chain; its full sequence is Meiotic drive suppressor wtf35 (271 aa).

2 disordered regions span residues 1–24 (MKNN…DHEI) and 54–75 (TVPE…ERRQ). Residues 57–69 (EDSSTGPTETANP) show a composition bias toward polar residues. The next 4 helical transmembrane spans lie at 90-110 (LLIS…CVNP), 120-140 (AFSV…FCFF), 176-196 (WENM…VGSP), and 213-233 (SLAE…AETV).

It belongs to the WTF family. As to quaternary structure, homomer. Interacts with other proteins that exhibit high sequence similarity.

The protein resides in the spore membrane. It localises to the vacuole membrane. Functionally, acts as a suppressor component of the dual wtf meiotic drive system, and can suppress but not confer meiotic drive by compatible poisons. Wtf meiotic drive systems promote unequal transmission of alleles from the parental zygote to progeny spores by encoding a poison and an antidote from the same locus; the poison is trans-acting and forms toxic aggregates in all spores within an ascus, wherease the antidote is spore-specific and targets aggregates for degradation by the vacuole. Meiotic drive by wtf systems therefore lead to poisoning of all progeny that do not inherit the dual poison/antidote allele, or express a compatible antidote. This chain is Meiotic drive suppressor wtf35, found in Schizosaccharomyces kambucha (Fission yeast).